Consider the following 103-residue polypeptide: Large ribosomal subunit protein eL30 (103 aa).

Belongs to the eukaryotic ribosomal protein eL30 family.

This is Large ribosomal subunit protein eL30 from Methanosarcina mazei (strain ATCC BAA-159 / DSM 3647 / Goe1 / Go1 / JCM 11833 / OCM 88) (Methanosarcina frisia).